The following is a 133-amino-acid chain: Maturin (133 aa).

This sequence belongs to the MTURN family.

The protein resides in the cytoplasm. Functionally, may be involved in early neuronal development. May play a role in promoting megakaryocyte differentiation. In Danio rerio (Zebrafish), this protein is Maturin (mturn).